A 542-amino-acid chain; its full sequence is ATP synthase subunit alpha (542 aa).

Position 173 to 180 (173 to 180) interacts with ATP; it reads GDRQTGKT. The segment at 518 to 542 is disordered; sequence PLVEKKPDEKHTTPVEQEKIVAGEK. The segment covering 519–542 has biased composition (basic and acidic residues); sequence LVEKKPDEKHTTPVEQEKIVAGEK.

Belongs to the ATPase alpha/beta chains family. As to quaternary structure, F-type ATPases have 2 components, CF(1) - the catalytic core - and CF(0) - the membrane proton channel. CF(1) has five subunits: alpha(3), beta(3), gamma(1), delta(1), epsilon(1). CF(0) has three main subunits: a(1), b(2) and c(9-12). The alpha and beta chains form an alternating ring which encloses part of the gamma chain. CF(1) is attached to CF(0) by a central stalk formed by the gamma and epsilon chains, while a peripheral stalk is formed by the delta and b chains.

The protein localises to the cell membrane. It catalyses the reaction ATP + H2O + 4 H(+)(in) = ADP + phosphate + 5 H(+)(out). Produces ATP from ADP in the presence of a proton gradient across the membrane. The alpha chain is a regulatory subunit. The protein is ATP synthase subunit alpha of Bifidobacterium adolescentis (strain ATCC 15703 / DSM 20083 / NCTC 11814 / E194a).